Reading from the N-terminus, the 151-residue chain is Deoxyuridine 5'-triphosphate nucleotidohydrolase (151 aa).

Substrate contacts are provided by residues 70 to 72, Asn-83, 87 to 89, and Met-97; these read RSG and LID.

This sequence belongs to the dUTPase family. The cofactor is Mg(2+).

It carries out the reaction dUTP + H2O = dUMP + diphosphate + H(+). It participates in pyrimidine metabolism; dUMP biosynthesis; dUMP from dCTP (dUTP route): step 2/2. This enzyme is involved in nucleotide metabolism: it produces dUMP, the immediate precursor of thymidine nucleotides and it decreases the intracellular concentration of dUTP so that uracil cannot be incorporated into DNA. The polypeptide is Deoxyuridine 5'-triphosphate nucleotidohydrolase (Pseudomonas aeruginosa (strain LESB58)).